The primary structure comprises 189 residues: Cytochrome bo(3) ubiquinol oxidase subunit 3 (189 aa).

Topologically, residues 1–10 (MIKETMRNNK) are cytoplasmic. The chain crosses the membrane as a helical span at residues 11–31 (LFGLWIYLMSDCIIFAVLFAV). At 32-52 (YAIISSNFSTNLINHKIFNLS) the chain is on the extracellular side. The helical transmembrane segment at 53-73 (YVFLETLILLLSSLSSGMLTI) threads the bilayer. Topologically, residues 74–81 (QKNKNNIK) are cytoplasmic. A helical membrane pass occupies residues 82–102 (IIYFYLLLTFFLGLSFLLMEV). Topologically, residues 103–122 (NEFYKLILENCSPSQHAFFS) are extracellular. The chain crosses the membrane as a helical span at residues 123 to 143 (IFFTIVGVHGIHVFFGLIFIL). Topologically, residues 144–161 (SILYQLFYLGITNTIRIR) are cytoplasmic. A helical transmembrane segment spans residues 162–182 (ILCFSLFWHFLDIIWICVFTF). Residues 183 to 189 (VYLNGVI) are Extracellular-facing.

This sequence belongs to the cytochrome c oxidase subunit 3 family. As to quaternary structure, heterooctamer of two A chains, two B chains, two C chains and two D chains.

It localises to the cell membrane. In terms of biological role, cytochrome bo(3) ubiquinol terminal oxidase is the component of the aerobic respiratory chain of E.coli that predominates when cells are grown at high aeration. Has proton pump activity across the membrane in addition to electron transfer, pumping 2 protons/electron. The polypeptide is Cytochrome bo(3) ubiquinol oxidase subunit 3 (cyoC) (Buchnera aphidicola subsp. Schizaphis graminum (strain Sg)).